Reading from the N-terminus, the 524-residue chain is Tyrosine-protein kinase HCK (524 aa).

A disordered region spans residues 1–72; it reads MGGRSSCEDP…NNSNSMPPGF (72 aa). Gly-2 is lipidated: N-myristoyl glycine. The S-palmitoyl cysteine moiety is linked to residue Gly-3. Residues 29–38 show a composition bias toward basic and acidic residues; that stretch reads FLRDGSKASK. Tyr-50 is subject to Phosphotyrosine; by autocatalysis. The span at 54 to 68 shows a compositional bias: polar residues; that stretch reads PTSSSKLGPNNSNSM. An SH3 domain is found at 76–136; it reads SEDTIVVALY…PSNYVARVNS (61 aa). One can recognise an SH2 domain in the interval 142 to 239; sequence WFFKGISRKD…GLCQKLSVPC (98 aa). A Phosphothreonine modification is found at Thr-200. Phosphotyrosine is present on Tyr-207. Residues 260–513 enclose the Protein kinase domain; it reads LQMEKKLGAG…YIQSVLDDFY (254 aa). ATP contacts are provided by residues 266–274 and Lys-288; that span reads LGAGQFGEV. Asp-379 serves as the catalytic Proton acceptor. Tyr-409 carries the phosphotyrosine; by autocatalysis modification. Ser-460 carries the phosphoserine modification. Phosphotyrosine is present on Tyr-520.

Belongs to the protein kinase superfamily. Tyr protein kinase family. SRC subfamily. In terms of assembly, interacts with ADAM15. Interacts with FASLG. Interacts with ARRB1 and ARRB2. Interacts with FCGR1A; the interaction may be indirect. Interacts with IL6ST. Interacts (via SH3 domain) with ELMO1. Interacts (via SH3 domain) with TP73. Interacts with YAP1. Interacts with ABL1 and ITGB1, and thereby recruits ABL1 to activated ITGB1. Interacts (via SH2 domain) with FLT3 (tyrosine phosphorylated). Interacts with CBL. Interacts with VAV1, WAS and RAPGEF1. Interacts (via SH3 domain) with WDCP. Post-translationally, phosphorylated on several tyrosine residues. Autophosphorylated. Becomes rapidly phosphorylated upon activation of the immunoglobulin receptors FCGR1A and FCGR2A. Phosphorylation at Tyr-409 increases kinase activity. Phosphorylation at Tyr-520 inhibits kinase activity. Kinase activity is not required for phosphorylation at Tyr-520, suggesting that this site may be a target of other kinases. In terms of processing, ubiquitinated by CBL, leading to its degradation via the proteasome. Isoform 2 palmitoylation at position 2 requires prior myristoylation. Palmitoylation at position 3 is required for caveolar localization of isoform 2. In terms of tissue distribution, expressed predominantly in cells of the myeloid and B-lymphoid lineages.

It is found in the cytoplasmic vesicle. It localises to the secretory vesicle. The protein resides in the cytoplasm. Its subcellular location is the cytosol. The protein localises to the membrane. It is found in the caveola. It localises to the lysosome. The protein resides in the cell projection. Its subcellular location is the podosome membrane. The protein localises to the cell membrane. It is found in the cell junction. It localises to the focal adhesion. The protein resides in the cytoskeleton. Its subcellular location is the golgi apparatus. The protein localises to the nucleus. The catalysed reaction is L-tyrosyl-[protein] + ATP = O-phospho-L-tyrosyl-[protein] + ADP + H(+). With respect to regulation, subject to autoinhibition, mediated by intramolecular interactions involving the SH2 and SH3 domains. Kinase activity is also regulated by phosphorylation at regulatory tyrosine residues. Phosphorylation at Tyr-409 is required for optimal activity. Phosphorylation at Tyr-520 inhibits kinase activity. Inhibited by PP1. Non-receptor tyrosine-protein kinase found in hematopoietic cells that transmits signals from cell surface receptors and plays an important role in the regulation of innate immune responses, including neutrophil, monocyte, macrophage and mast cell functions, phagocytosis, cell survival and proliferation, cell adhesion and migration. Acts downstream of receptors that bind the Fc region of immunoglobulins, such as FCGR1A and FCGR2A, but also CSF3R, PLAUR, the receptors for IFNG, IL2, IL6 and IL8, and integrins, such as ITGB1 and ITGB2. During the phagocytic process, mediates mobilization of secretory lysosomes, degranulation, and activation of NADPH oxidase to bring about the respiratory burst. Plays a role in the release of inflammatory molecules. Promotes reorganization of the actin cytoskeleton and actin polymerization, formation of podosomes and cell protrusions. Inhibits TP73-mediated transcription activation and TP73-mediated apoptosis. Phosphorylates CBL in response to activation of immunoglobulin gamma Fc region receptors. Phosphorylates ADAM15, BCR, ELMO1, FCGR2A, GAB1, GAB2, RAPGEF1, STAT5B, TP73, VAV1 and WAS. In Mus musculus (Mouse), this protein is Tyrosine-protein kinase HCK (Hck).